We begin with the raw amino-acid sequence, 461 residues long: Ufm1-specific protease 2 (461 aa).

Residues Cys-294, Asp-418, and His-420 contribute to the active site.

This sequence belongs to the peptidase C78 family.

The protein localises to the endoplasmic reticulum. It is found in the cytoplasm. Its subcellular location is the nucleus. Thiol-dependent isopeptidase that specifically cleaves UFM1, a ubiquitin-like modifier protein, from conjugated proteins, such as CD274/PD-L1, CYB5R3, DDRGK1, MRE11, RPL26/uL24, TRIP4 and RPL26/uL24. While it is also able to mediate the processing of UFM1 precursors, a prerequisite for conjugation reactions, UFSP2 mainly acts as a protein deUFMylase that mediates deconjugation of UFM1 from target proteins. Mediates deUFMylation of RPL26/uL24, a critical step to release the UFM1 ribosome E3 ligase (UREL) complex during the recycling of 60S ribosome subunits from the endoplasmic reticulum. Catalyzes deUFMylation of TRIP4, regulating intracellular nuclear receptors transactivation and thereby regulate cell proliferation and differentiation. This is Ufm1-specific protease 2 from Rattus norvegicus (Rat).